Consider the following 300-residue polypeptide: Aspartate carbamoyltransferase catalytic subunit (300 aa).

R50 and T51 together coordinate carbamoyl phosphate. Residue K78 coordinates L-aspartate. Positions 100, 127, and 130 each coordinate carbamoyl phosphate. L-aspartate contacts are provided by R160 and R210. A253 and P254 together coordinate carbamoyl phosphate.

Belongs to the aspartate/ornithine carbamoyltransferase superfamily. ATCase family. As to quaternary structure, heterododecamer (2C3:3R2) of six catalytic PyrB chains organized as two trimers (C3), and six regulatory PyrI chains organized as three dimers (R2).

The catalysed reaction is carbamoyl phosphate + L-aspartate = N-carbamoyl-L-aspartate + phosphate + H(+). The protein operates within pyrimidine metabolism; UMP biosynthesis via de novo pathway; (S)-dihydroorotate from bicarbonate: step 2/3. In terms of biological role, catalyzes the condensation of carbamoyl phosphate and aspartate to form carbamoyl aspartate and inorganic phosphate, the committed step in the de novo pyrimidine nucleotide biosynthesis pathway. The polypeptide is Aspartate carbamoyltransferase catalytic subunit (Staphylococcus saprophyticus subsp. saprophyticus (strain ATCC 15305 / DSM 20229 / NCIMB 8711 / NCTC 7292 / S-41)).